The chain runs to 529 residues: Alkaline phosphatase, germ cell type (529 aa).

The signal sequence occupies residues 1 to 18 (MWGACLLLLGLSLQVCPS). Mg(2+) is bound at residue Asp-60. 2 residues coordinate Zn(2+): Asp-60 and Ser-110. The Phosphoserine intermediate role is filled by Ser-110. Residues Cys-139 and Cys-201 are joined by a disulfide bond. N-linked (GlcNAc...) asparagine glycosylation is present at Asn-140. Ser-173 is a binding site for Mg(2+). Position 234 (Glu-234) interacts with Ca(2+). 2 N-linked (GlcNAc...) asparagine glycosylation sites follow: Asn-267 and Asn-277. Phe-287, Glu-288, and Asp-303 together coordinate Ca(2+). Glu-329 provides a ligand contact to Mg(2+). Zn(2+)-binding residues include Asp-334, His-338, Asp-375, His-376, and His-450. Residues Cys-485 and Cys-492 are joined by a disulfide bond. Ser-502 is lipidated: GPI-anchor amidated serine. The propeptide at 503–529 (AVSPGYMSTLLCLLAGKMLMLMAAAEP) is removed in mature form.

Belongs to the alkaline phosphatase family. In terms of assembly, homodimer. The cofactor is Mg(2+). It depends on Zn(2+) as a cofactor. Ca(2+) is required as a cofactor. Embryo and testis.

The protein resides in the cell membrane. The catalysed reaction is a phosphate monoester + H2O = an alcohol + phosphate. Its activity is regulated as follows. Inhibited by L-leucine, EDTA and heat. Alkaline phosphatase that can hydrolyze various phosphate compounds. The sequence is that of Alkaline phosphatase, germ cell type (Alpg) from Mus musculus (Mouse).